A 348-amino-acid chain; its full sequence is 4-hydroxyphenylpyruvate dioxygenase (348 aa).

2 consecutive VOC domains span residues 11 to 141 and 151 to 303; these read GFAF…ITSS and AIDH…IFTE. 3 residues coordinate Fe cation: histidine 154, histidine 232, and glutamate 312.

Belongs to the 4HPPD family. It depends on Fe cation as a cofactor.

It catalyses the reaction 3-(4-hydroxyphenyl)pyruvate + O2 = homogentisate + CO2. Catalyzes the transformation of p-hydroxyphenylpyruvate into HGA. Has hemolytic and brown pigment production activity. The chain is 4-hydroxyphenylpyruvate dioxygenase (lly) from Legionella pneumophila (strain Corby).